Consider the following 374-residue polypeptide: ATPase ASNA1 homolog (374 aa).

Residue 44–51 participates in ATP binding; sequence KGGVGKTT. The active site involves aspartate 73. ATP-binding residues include glutamate 244 and asparagine 271.

The protein belongs to the arsA ATPase family. As to quaternary structure, homodimer.

It localises to the cytoplasm. Its subcellular location is the endoplasmic reticulum. In terms of biological role, ATPase required for the post-translational delivery of tail-anchored (TA) proteins to the endoplasmic reticulum. Recognizes and selectively binds the transmembrane domain of TA proteins in the cytosol. This complex then targets to the endoplasmic reticulum by membrane-bound receptors, where the tail-anchored protein is released for insertion. This process is regulated by ATP binding and hydrolysis. ATP binding drives the homodimer towards the closed dimer state, facilitating recognition of newly synthesized TA membrane proteins. ATP hydrolysis is required for insertion. Subsequently, the homodimer reverts towards the open dimer state, lowering its affinity for the membrane-bound receptor, and returning it to the cytosol to initiate a new round of targeting. This chain is ATPase ASNA1 homolog, found in Plasmodium vivax (strain Salvador I).